Reading from the N-terminus, the 106-residue chain is Large ribosomal subunit protein uL30 (106 aa).

Belongs to the universal ribosomal protein uL30 family. As to quaternary structure, part of the 50S ribosomal subunit.

The polypeptide is Large ribosomal subunit protein uL30 (Ruthia magnifica subsp. Calyptogena magnifica).